The chain runs to 361 residues: MTITQMISEILMHNTVYNYILSLISIILFIVIGKYANALIERLADKLHKKSGIELDELLIRALSLPVAIAIILSGFYFGVNFLYLLPSLKTAVNEGILTAFILCVVVFFDRFLNELVERYLALTISKKTKKDVDDQIVVLTKKLVRLVVWVVGLLLILSNLGYDIKTLLAGLGIGGLAVALASQNLVSNLIAGLIILTDKPFKIGNWITFSGGSGIVEDIGIRSTKIRATDNSIIVVPNSKLIDEIIQNVPSKNKWKVSTTIGVTYNTPVEKIRKAEEIIKNILLEHPNVEDEPITVYFKEFGDWSLNIQVVYYIKNSRYNGYQKYISTINEVNLKIKEEFDRKGIEFAFPTYTLYLKRDD.

5 helical membrane-spanning segments follow: residues 20–40 (ILSLISIILFIVIGKYANALI), 65–85 (LPVAIAIILSGFYFGVNFLYL), 89–109 (LKTAVNEGILTAFILCVVVFF), 137–157 (IVVLTKKLVRLVVWVVGLLLI), and 177–197 (LAVALASQNLVSNLIAGLIIL).

Belongs to the MscS (TC 1.A.23) family.

It localises to the cell membrane. Its function is as follows. Large-conductance mechanosensitive channel that opens in response to stretch forces in the membrane lipid bilayer. Selective for cations. Rectifies with voltage. This chain is Large-conductance mechanosensitive channel MscMJLR, found in Methanocaldococcus jannaschii (strain ATCC 43067 / DSM 2661 / JAL-1 / JCM 10045 / NBRC 100440) (Methanococcus jannaschii).